A 220-amino-acid chain; its full sequence is MSSLSKEAVMVHEALLARGLETPLRGALLDRDTRKQRIAEHMTEIMNLLSLDLSDDSLAETPTRIAKMYVDEIFSGLDYANFPKITIIENKMKVDEMVTVRDITLTSTCEHHFVTIDGKATVAYIPKDGVIGLSKLNRIVQFFSQRPQVQERLTQQILVALQTLLGTNNVAVSIDAVHYCVKARGIRDATSATTTTSLGGLFKSSQNTRQEFLRAVRHHN.

Residues cysteine 109, histidine 112, and cysteine 180 each coordinate Zn(2+).

Belongs to the GTP cyclohydrolase I family. Homomer.

The enzyme catalyses GTP + H2O = 7,8-dihydroneopterin 3'-triphosphate + formate + H(+). It functions in the pathway cofactor biosynthesis; 7,8-dihydroneopterin triphosphate biosynthesis; 7,8-dihydroneopterin triphosphate from GTP: step 1/1. The sequence is that of GTP cyclohydrolase 1 from Pectobacterium carotovorum subsp. carotovorum (strain PC1).